The primary structure comprises 132 residues: Ribosome-binding factor A (132 aa).

Belongs to the RbfA family. As to quaternary structure, monomer. Binds 30S ribosomal subunits, but not 50S ribosomal subunits or 70S ribosomes.

It is found in the cytoplasm. In terms of biological role, one of several proteins that assist in the late maturation steps of the functional core of the 30S ribosomal subunit. Associates with free 30S ribosomal subunits (but not with 30S subunits that are part of 70S ribosomes or polysomes). Required for efficient processing of 16S rRNA. May interact with the 5'-terminal helix region of 16S rRNA. The protein is Ribosome-binding factor A of Prochlorococcus marinus (strain MIT 9515).